Here is a 334-residue protein sequence, read N- to C-terminus: tRNA N6-adenosine threonylcarbamoyltransferase (334 aa).

Residues histidine 112 and histidine 116 each coordinate Fe cation. Residues 135 to 139 (VVSGG), aspartate 168, glycine 181, aspartate 185, and asparagine 274 each bind substrate. A Fe cation-binding site is contributed by aspartate 303.

The protein belongs to the KAE1 / TsaD family. The cofactor is Fe(2+).

The protein resides in the cytoplasm. The enzyme catalyses L-threonylcarbamoyladenylate + adenosine(37) in tRNA = N(6)-L-threonylcarbamoyladenosine(37) in tRNA + AMP + H(+). Functionally, required for the formation of a threonylcarbamoyl group on adenosine at position 37 (t(6)A37) in tRNAs that read codons beginning with adenine. Is involved in the transfer of the threonylcarbamoyl moiety of threonylcarbamoyl-AMP (TC-AMP) to the N6 group of A37, together with TsaE and TsaB. TsaD likely plays a direct catalytic role in this reaction. The chain is tRNA N6-adenosine threonylcarbamoyltransferase from Anaeromyxobacter dehalogenans (strain 2CP-1 / ATCC BAA-258).